We begin with the raw amino-acid sequence, 96 residues long: uncharacterized protein (96 aa).

The next 2 helical transmembrane spans lie at 27 to 47 (LAFRISELFLIFSIPLFALLI) and 50 to 70 (LSGVNRVLMFFILVYYISIVF).

The protein resides in the cell membrane. This is an uncharacterized protein from Haemophilus influenzae (strain ATCC 51907 / DSM 11121 / KW20 / Rd).